The chain runs to 37 residues: Large ribosomal subunit protein bL36c (37 aa).

It belongs to the bacterial ribosomal protein bL36 family.

The protein resides in the plastid. It is found in the chloroplast. This chain is Large ribosomal subunit protein bL36c, found in Lotus japonicus (Lotus corniculatus var. japonicus).